A 644-amino-acid chain; its full sequence is Protein cueball (644 aa).

The signal sequence occupies residues 1-26 (MIRIRFGMDVLLVLLLATCLLTPAHG). At 27 to 531 (TPLEWDFAVT…VCLTPRVWTS (505 aa)) the chain is on the extracellular side. N-linked (GlcNAc...) asparagine glycans are attached at residues N82 and N108. LDL-receptor class B repeat units lie at residues 121-166 (MNLF…DVCR), 167-211 (RKLY…DQLS), and 212-257 (DRLF…TNDA). Residues N175 and N190 are each glycosylated (N-linked (GlcNAc...) asparagine). Positions 280–301 (TTTSKPEEEDSTDSTDFTDPEP) are disordered. Residues 286–301 (EEEDSTDSTDFTDPEP) show a composition bias toward acidic residues. N-linked (GlcNAc...) asparagine glycosylation is present at N313. EGF-like domains lie at 398 to 430 (EIRECHNYCVHGTCQMSELAYPKCYCQPGFTGE) and 433 to 471 (ELSVCSGLCLNGGHCRVSKDENEAPSCECPAKFGGARCE). 5 disulfide bridges follow: C402–C411, C406–C421, C437–C447, C441–C459, and C461–C470. Residues N473 and N508 are each glycosylated (N-linked (GlcNAc...) asparagine). Residues 532 to 552 (SVIIILVVGIVSSLLLVAVIV) form a helical membrane-spanning segment. Topologically, residues 553–644 (HGIRRLYKPK…LIHNMEDDLY (92 aa)) are cytoplasmic.

The protein belongs to the cueball family.

Its subcellular location is the cell membrane. Its function is as follows. Has a role in spermatogenesis and oogenesis. This Drosophila sechellia (Fruit fly) protein is Protein cueball.